The following is a 241-amino-acid chain: 1-(5-phosphoribosyl)-5-[(5-phosphoribosylamino)methylideneamino] imidazole-4-carboxamide isomerase (241 aa).

Aspartate 10 (proton acceptor) is an active-site residue. The active-site Proton donor is the aspartate 129.

This sequence belongs to the HisA/HisF family.

The protein resides in the cytoplasm. It catalyses the reaction 1-(5-phospho-beta-D-ribosyl)-5-[(5-phospho-beta-D-ribosylamino)methylideneamino]imidazole-4-carboxamide = 5-[(5-phospho-1-deoxy-D-ribulos-1-ylimino)methylamino]-1-(5-phospho-beta-D-ribosyl)imidazole-4-carboxamide. Its pathway is amino-acid biosynthesis; L-histidine biosynthesis; L-histidine from 5-phospho-alpha-D-ribose 1-diphosphate: step 4/9. The chain is 1-(5-phosphoribosyl)-5-[(5-phosphoribosylamino)methylideneamino] imidazole-4-carboxamide isomerase from Salinispora tropica (strain ATCC BAA-916 / DSM 44818 / JCM 13857 / NBRC 105044 / CNB-440).